We begin with the raw amino-acid sequence, 386 residues long: Succinate--CoA ligase [ADP-forming] subunit beta (386 aa).

The region spanning 9 to 244 (KAVLRSYGVS…LDEEDSKEIE (236 aa)) is the ATP-grasp domain. Residues K46, 53 to 55 (GRG), E99, C102, and E107 contribute to the ATP site. Positions 199 and 213 each coordinate Mg(2+). Substrate contacts are provided by residues N264 and 321 to 323 (GIM).

Belongs to the succinate/malate CoA ligase beta subunit family. Heterotetramer of two alpha and two beta subunits. It depends on Mg(2+) as a cofactor.

The catalysed reaction is succinate + ATP + CoA = succinyl-CoA + ADP + phosphate. It catalyses the reaction GTP + succinate + CoA = succinyl-CoA + GDP + phosphate. Its pathway is carbohydrate metabolism; tricarboxylic acid cycle; succinate from succinyl-CoA (ligase route): step 1/1. In terms of biological role, succinyl-CoA synthetase functions in the citric acid cycle (TCA), coupling the hydrolysis of succinyl-CoA to the synthesis of either ATP or GTP and thus represents the only step of substrate-level phosphorylation in the TCA. The beta subunit provides nucleotide specificity of the enzyme and binds the substrate succinate, while the binding sites for coenzyme A and phosphate are found in the alpha subunit. This chain is Succinate--CoA ligase [ADP-forming] subunit beta, found in Bacillus cereus (strain B4264).